Reading from the N-terminus, the 945-residue chain is Isoleucine--tRNA ligase (945 aa).

Residues 66-76 (PYANGDIHLGH) carry the 'HIGH' region motif. Glu581 is an L-isoleucyl-5'-AMP binding site. Residues 622 to 626 (KMSKS) carry the 'KMSKS' region motif. Lys625 provides a ligand contact to ATP. Zn(2+)-binding residues include Cys908, Cys911, Cys928, and Cys931.

The protein belongs to the class-I aminoacyl-tRNA synthetase family. IleS type 1 subfamily. As to quaternary structure, monomer. Zn(2+) is required as a cofactor.

Its subcellular location is the cytoplasm. The catalysed reaction is tRNA(Ile) + L-isoleucine + ATP = L-isoleucyl-tRNA(Ile) + AMP + diphosphate. Catalyzes the attachment of isoleucine to tRNA(Ile). As IleRS can inadvertently accommodate and process structurally similar amino acids such as valine, to avoid such errors it has two additional distinct tRNA(Ile)-dependent editing activities. One activity is designated as 'pretransfer' editing and involves the hydrolysis of activated Val-AMP. The other activity is designated 'posttransfer' editing and involves deacylation of mischarged Val-tRNA(Ile). The protein is Isoleucine--tRNA ligase of Burkholderia orbicola (strain MC0-3).